We begin with the raw amino-acid sequence, 560 residues long: Serine/threonine-protein kinase TOS3 (560 aa).

A Protein kinase domain is found at 50–344 (FEILATLGNG…LADIKVHPFM (295 aa)). ATP-binding positions include 56–64 (LGNGQYGKV) and Lys79. The active-site Proton acceptor is Asp189.

This sequence belongs to the protein kinase superfamily. Ser/Thr protein kinase family. Autophosphorylated.

It carries out the reaction L-seryl-[protein] + ATP = O-phospho-L-seryl-[protein] + ADP + H(+). The catalysed reaction is L-threonyl-[protein] + ATP = O-phospho-L-threonyl-[protein] + ADP + H(+). Functionally, one of the three SNF1 protein kinases (with SAK1 and ELM1) which are required for growth on nonfermentable carbon sources and nonpreferred sugars and for response to environmental stress. Activates SNF1 by phosphorylation of its activation-loop 'Thr-210'. Required for the regulation by SNF1 of the transcription of a large set of genes, the modification the activity of metabolic enzymes, and the control of various nutrient-responsive cellular developmental processes. Also phosphorylates GAL83, MIG1 and SIP2. This is Serine/threonine-protein kinase TOS3 (TOS3) from Saccharomyces cerevisiae (strain ATCC 204508 / S288c) (Baker's yeast).